The sequence spans 354 residues: Rhodopsin (354 aa).

Topologically, residues 1–36 (MNGTEGPYFYIPMVNTTGIVRSPYDYPQYYLVNPAA) are extracellular. 2 N-linked (GlcNAc...) asparagine glycosylation sites follow: Asn2 and Asn15. A helical membrane pass occupies residues 37 to 61 (YAALGAYMFFLILVGFPINFLTLYV). At 62 to 73 (TIEHKKLRTPLN) the chain is on the cytoplasmic side. The helical transmembrane segment at 74–96 (YILLNLAVANLFMVFGGFTTTMY) threads the bilayer. The Extracellular segment spans residues 97 to 110 (TSMHGYFVLGRLGC). Cys110 and Cys187 are disulfide-bonded. Residues 111–133 (NLEGFFATLGGEIALWSLVVLAV) form a helical membrane-spanning segment. The short motif at 134–136 (ERW) is the 'Ionic lock' involved in activated form stabilization element. Residues 134–152 (ERWMVVCKPISNFRFGENH) are Cytoplasmic-facing. The helical transmembrane segment at 153–173 (AIMGLAMTWLMASACAVPPLV) threads the bilayer. Residues 174–202 (GWSRYIPEGMQCSCGVDYYTRAEGFNNES) lie on the Extracellular side of the membrane. A glycan (N-linked (GlcNAc...) asparagine) is linked at Asn200. A helical membrane pass occupies residues 203–224 (FVVYMFCCHFMIPLIIVFFCYG). Residues 225 to 252 (RLLCAVKEAAAAQQESETTQRAEREVTR) lie on the Cytoplasmic side of the membrane. The helical transmembrane segment at 253–274 (MVVIMVIAFLVCWLPYASVAWW) threads the bilayer. Over 275-286 (IFTHQGSEFGPV) the chain is Extracellular. The chain crosses the membrane as a helical span at residues 287 to 308 (FMTIPAFFAKSSSIYNPMIYIC). Lys296 carries the N6-(retinylidene)lysine modification. Residues 309–354 (MNKQFRNCMITTLCCGKNPFEEEEGASSTASKTEASSVSSSSVSPA) are Cytoplasmic-facing. S-palmitoyl cysteine attachment occurs at residues Cys322 and Cys323. The disordered stretch occupies residues 329-354 (EEEEGASSTASKTEASSVSSSSVSPA). The segment covering 334–354 (ASSTASKTEASSVSSSSVSPA) has biased composition (low complexity).

This sequence belongs to the G-protein coupled receptor 1 family. Opsin subfamily. Post-translationally, phosphorylated on some or all of the serine and threonine residues present in the C-terminal region. Contains one covalently linked retinal chromophore.

The protein resides in the membrane. It localises to the cell projection. Its subcellular location is the cilium. The protein localises to the photoreceptor outer segment. Its function is as follows. Photoreceptor required for image-forming vision at low light intensity. While most salt water fish species use retinal as chromophore, most freshwater fish use 3-dehydroretinal, or a mixture of retinal and 3-dehydroretinal. Light-induced isomerization of 11-cis to all-trans retinal triggers a conformational change that activates signaling via G-proteins. Subsequent receptor phosphorylation mediates displacement of the bound G-protein alpha subunit by arrestin and terminates signaling. The polypeptide is Rhodopsin (rho) (Mullus surmuletus (Striped red mullet)).